The chain runs to 247 residues: 2,3-bisphosphoglycerate-dependent phosphoglycerate mutase (247 aa).

Substrate is bound by residues 8–15, 21–22, arginine 60, 87–90, lysine 98, 114–115, and 183–184; these read RHGESTWN, TG, ERHY, RR, and GN. Histidine 9 functions as the Tele-phosphohistidine intermediate in the catalytic mechanism. Glutamate 87 serves as the catalytic Proton donor/acceptor.

The protein belongs to the phosphoglycerate mutase family. BPG-dependent PGAM subfamily. As to quaternary structure, homodimer.

It catalyses the reaction (2R)-2-phosphoglycerate = (2R)-3-phosphoglycerate. It participates in carbohydrate degradation; glycolysis; pyruvate from D-glyceraldehyde 3-phosphate: step 3/5. Functionally, catalyzes the interconversion of 2-phosphoglycerate and 3-phosphoglycerate. The protein is 2,3-bisphosphoglycerate-dependent phosphoglycerate mutase of Delftia acidovorans (strain DSM 14801 / SPH-1).